The primary structure comprises 235 residues: Large ribosomal subunit protein uL1 (235 aa).

This sequence belongs to the universal ribosomal protein uL1 family. As to quaternary structure, part of the 50S ribosomal subunit.

In terms of biological role, binds directly to 23S rRNA. The L1 stalk is quite mobile in the ribosome, and is involved in E site tRNA release. Protein L1 is also a translational repressor protein, it controls the translation of the L11 operon by binding to its mRNA. The sequence is that of Large ribosomal subunit protein uL1 from Mycobacterium sp. (strain JLS).